We begin with the raw amino-acid sequence, 142 residues long: Transcriptional regulator MraZ (142 aa).

SpoVT-AbrB domains follow at residues 5-47 (EYPY…PLPG) and 76-119 (ASKA…NPQR).

It belongs to the MraZ family. In terms of assembly, forms oligomers.

Its subcellular location is the cytoplasm. It is found in the nucleoid. The sequence is that of Transcriptional regulator MraZ from Deinococcus radiodurans (strain ATCC 13939 / DSM 20539 / JCM 16871 / CCUG 27074 / LMG 4051 / NBRC 15346 / NCIMB 9279 / VKM B-1422 / R1).